A 213-amino-acid polypeptide reads, in one-letter code: Ribosomal RNA small subunit methyltransferase G (213 aa).

S-adenosyl-L-methionine is bound by residues G72, F77, 125-126 (IE), and R141.

It belongs to the methyltransferase superfamily. RNA methyltransferase RsmG family.

The protein resides in the cytoplasm. It carries out the reaction guanosine(527) in 16S rRNA + S-adenosyl-L-methionine = N(7)-methylguanosine(527) in 16S rRNA + S-adenosyl-L-homocysteine. In terms of biological role, specifically methylates the N7 position of guanine in position 527 of 16S rRNA. The sequence is that of Ribosomal RNA small subunit methyltransferase G from Rhizobium meliloti (strain 1021) (Ensifer meliloti).